The chain runs to 646 residues: Lipoteichoic acid synthase (646 aa).

The Cytoplasmic segment spans residues 1–7; that stretch reads MSSQKKK. A helical membrane pass occupies residues 8 to 28; the sequence is ISLFAFFLLTVITITLKTYFS. The Extracellular portion of the chain corresponds to 29–43; that stretch reads YYVDFSLGVKGLVQN. Residues 44–64 form a helical membrane-spanning segment; sequence LILLMNPYSLVALVLSVFLFF. Topologically, residues 65–68 are cytoplasmic; the sequence is KGKK. A helical membrane pass occupies residues 69-89; that stretch reads AFWFMFIGGFLLTFLLYANVV. The Extracellular portion of the chain corresponds to 90–119; sequence YFRFFSDFLTFSTLNQVGNVESMGGAVSAS. The chain crosses the membrane as a helical span at residues 120–140; that stretch reads FKWYDFVYFIDTLVYLFILIF. At 141–153 the chain is on the cytoplasmic side; it reads KTKWLDTKAFSKK. The chain crosses the membrane as a helical span at residues 154-174; the sequence is FVPVVMAASVALFFLNLAFAE. At 175–646 the chain is on the extracellular side; it reads TDRPELLTRT…ETGPKANSKK (472 aa). Mn(2+)-binding residues include E255 and T300. T300 is a catalytic residue. H416 lines the substrate pocket. D475 and H476 together coordinate Mn(2+). Over residues 623–638 the composition is skewed to basic and acidic residues; the sequence is NPDFKKVNPSKYKYET. A disordered region spans residues 623 to 646; it reads NPDFKKVNPSKYKYETGPKANSKK.

This sequence belongs to the LTA synthase family. Proteolytically cleaved.

The protein localises to the cell membrane. It localises to the secreted. It participates in cell wall biogenesis; lipoteichoic acid biosynthesis. In terms of biological role, catalyzes the polymerization of lipoteichoic acid (LTA) polyglycerol phosphate, a reaction that presumably uses phosphatidylglycerol (PG) as substrate. Is required for staphylococcal growth and cell division process. The polypeptide is Lipoteichoic acid synthase (ltaS) (Staphylococcus aureus (strain bovine RF122 / ET3-1)).